Consider the following 217-residue polypeptide: Thymidylate kinase (217 aa).

7–14 (GIDGAGKS) is a binding site for ATP.

It belongs to the thymidylate kinase family.

The enzyme catalyses dTMP + ATP = dTDP + ADP. Its function is as follows. Phosphorylation of dTMP to form dTDP in both de novo and salvage pathways of dTTP synthesis. This chain is Thymidylate kinase, found in Pelodictyon phaeoclathratiforme (strain DSM 5477 / BU-1).